We begin with the raw amino-acid sequence, 191 residues long: Large ribosomal subunit protein uL22 (191 aa).

Basic and acidic residues predominate over residues 159–168; that stretch reads VPKGEDDTAQ. A disordered region spans residues 159-191; the sequence is VPKGEDDTAQKKKVSQKKLKKQKLKAALSGGAD. The span at 169–182 shows a compositional bias: basic residues; the sequence is KKKVSQKKLKKQKL.

The protein belongs to the universal ribosomal protein uL22 family.

In Suberites domuncula (Sponge), this protein is Large ribosomal subunit protein uL22 (RPL17).